The following is a 236-amino-acid chain: Small ribosomal subunit protein uS2c (236 aa).

This sequence belongs to the universal ribosomal protein uS2 family.

It localises to the plastid. Its subcellular location is the chloroplast. This chain is Small ribosomal subunit protein uS2c (rps2), found in Amborella trichopoda.